Reading from the N-terminus, the 430-residue chain is MAEITNIRPSFDVSPVAAGLIGASVLVVCVSVTVFVWTCCHQQAEKKHKTPPYKFIHMLKGISIYPETLSNKKKIIKVRRDKDGSHRESGRGNLLVNAESGLLSHDRDPRGPSPASCIDQLPIKRDYGEELRSPMTSLTPGESKPTSPSSPEEDVMLGSLTFSVDYNFPKKALVVTIQEAHGLPVMDGQTQGSDPYIKMTILPDKRHRVKTRVLRKTLDPVFDETFTFYGIPYSQLQDLVLHFLVLSFDRFSRDDVIGEVMVPLAGVDPSTGKVQLTRDIIKRNIQKCISRGELQVSLSYQPVAQRMTVVVLKARHLPKMDITGLSGNPYVKVNVYYGRKRIAKKKTHVKKCTLNPIFNESFIYDIPTDLLPDISIEFLVIDFDRTTKNEVVGRLILGAHSVTTSGAEHWREVCESPRKPVAKWHSLSEY.

Residues 1 to 15 (MAEITNIRPSFDVSP) lie on the Vesicular side of the membrane. The chain crosses the membrane as a helical span at residues 16–36 (VAAGLIGASVLVVCVSVTVFV). Over 37 to 430 (WTCCHQQAEK…VAKWHSLSEY (394 aa)) the chain is Cytoplasmic. Residues 132-154 (RSPMTSLTPGESKPTSPSSPEED) are disordered. Ser133 carries the phosphoserine modification. Residues 140 to 150 (PGESKPTSPSS) are compositionally biased toward low complexity. 2 consecutive C2 domains span residues 156–278 (MLGS…QLTR) and 290–425 (SRGE…AKWH). Residues Asp249, Ser252, and Asp255 each contribute to the Ca(2+) site.

This sequence belongs to the synaptotagmin family. Homodimer. Can also form heterodimers. Interacts with PRKN. Interacts (via C2 2 domain) with AGO2 and SND1; the interaction with SND1 is direct. Interacts with KIF1A; the interaction increases in presence of calcium. Ca(2+) is required as a cofactor. Post-translationally, ubiquitinated, at least by PRKN, and targeted to the proteasome complex for degradation. Ubiquitination is inhibited by ATP13A2. In terms of tissue distribution, highly expressed in brain and at lower levels in other tissues.

It localises to the cytoplasmic vesicle membrane. The protein localises to the perikaryon. The protein resides in the golgi apparatus. It is found in the trans-Golgi network membrane. Its subcellular location is the recycling endosome membrane. It localises to the lysosome membrane. The protein localises to the cytoplasmic vesicle. The protein resides in the phagosome. It is found in the cell projection. Its subcellular location is the axon. It localises to the dendrite. The protein localises to the postsynaptic density. The protein resides in the clathrin-coated vesicle membrane. Functionally, synaptotagmin family member involved in vesicular and membrane trafficking which does not bind Ca(2+). Inhibits clathrin-mediated and bulk endocytosis in neurons, functions to ensure precision in vesicle retrieval. Plays an important role in dopamine transmission by regulating endocytosis and the vesicle-recycling process. Essential component of a neuronal vesicular trafficking pathway that differs from the synaptic vesicle trafficking pathway but is crucial for development and synaptic plasticity. In macrophages and microglia, inhibits the conventional cytokine secretion, of at least IL6 and TNF, and phagocytosis. In astrocytes, regulates lysosome exocytosis, mechanism required for the repair of injured astrocyte cell membrane. Required for the ATP13A2-mediated regulation of the autophagy-lysosome pathway. The protein is Synaptotagmin-11 of Rattus norvegicus (Rat).